Consider the following 260-residue polypeptide: Cell division protein DivIB (260 aa).

The Cytoplasmic portion of the chain corresponds to 1–25; sequence MGAQDQNGKNHGGLFRDFQNRNVKK. Residues 26-46 traverse the membrane as a helical segment; the sequence is MWPLVMPITIILLVMIFMISS. Residues 47-260 lie on the Extracellular side of the membrane; it reads YSRVKKVTVS…STKTTSVQGY (214 aa). A POTRA domain is found at 48 to 119; it reads SRVKKVTVSG…NQVKIKVEEY (72 aa).

It belongs to the FtsQ/DivIB family. DivIB subfamily.

The protein resides in the cell membrane. Functionally, cell division protein that may be involved in stabilizing or promoting the assembly of the division complex. The sequence is that of Cell division protein DivIB from Lentilactobacillus buchneri (strain NRRL B-30929) (Lactobacillus buchneri).